Here is a 339-residue protein sequence, read N- to C-terminus: DNA-directed RNA polymerase subunit alpha (339 aa).

Residues 1–233 (MVREEVAGST…DLFLPFLHAE (233 aa)) are alpha N-terminal domain (alpha-NTD). Residues 264-339 (KKGIPLNCIF…IDLLKNKLSF (76 aa)) form an alpha C-terminal domain (alpha-CTD) region.

It belongs to the RNA polymerase alpha chain family. In plastids the minimal PEP RNA polymerase catalytic core is composed of four subunits: alpha, beta, beta', and beta''. When a (nuclear-encoded) sigma factor is associated with the core the holoenzyme is formed, which can initiate transcription.

It is found in the plastid. It localises to the chloroplast. It carries out the reaction RNA(n) + a ribonucleoside 5'-triphosphate = RNA(n+1) + diphosphate. In terms of biological role, DNA-dependent RNA polymerase catalyzes the transcription of DNA into RNA using the four ribonucleoside triphosphates as substrates. This chain is DNA-directed RNA polymerase subunit alpha, found in Elymus hystrix (Eastern bottlebrush grass).